The chain runs to 341 residues: MAVFRLSELAEQIGATLKGNADLAITSIAALNNAEPTHITFISNAKYRSQLSQSKAGAIIVTAEDVEFCQATQNLLIVKDPYLAYALLAQYMDDLPKSANEISESAVISATAKLGKNVSIGANVVIESGVELADDITIGAGCFIGKNTKIGARSHLWANISVYHNVEIGSDCLIQSSAVIGSDGFGYANDKGRWIKIPQTGGVIIGNRVEIGACTCIDRGALDPTIIEDNVIIDNLCQIAHNVHIGFGTAIAGGVILAGSLKIGRFCQIGGASVINGHMEICDGAIITGMSMIMKPITEKGVYSSGIPAQTNKEWRKTAALTMNIADMNKRLKAIEKQLTE.

His241 (proton acceptor) is an active-site residue.

It belongs to the transferase hexapeptide repeat family. LpxD subfamily. As to quaternary structure, homotrimer.

It carries out the reaction a UDP-3-O-[(3R)-3-hydroxyacyl]-alpha-D-glucosamine + a (3R)-hydroxyacyl-[ACP] = a UDP-2-N,3-O-bis[(3R)-3-hydroxyacyl]-alpha-D-glucosamine + holo-[ACP] + H(+). Its pathway is bacterial outer membrane biogenesis; LPS lipid A biosynthesis. Its function is as follows. Catalyzes the N-acylation of UDP-3-O-acylglucosamine using 3-hydroxyacyl-ACP as the acyl donor. Is involved in the biosynthesis of lipid A, a phosphorylated glycolipid that anchors the lipopolysaccharide to the outer membrane of the cell. This Haemophilus ducreyi (strain 35000HP / ATCC 700724) protein is UDP-3-O-acylglucosamine N-acyltransferase.